Here is a 157-residue protein sequence, read N- to C-terminus: uncharacterized protein (157 aa).

A helical membrane pass occupies residues 42–64 (SCIRLIVMFICVAMITCPNSLRF).

It localises to the membrane. This is an uncharacterized protein from Saccharomyces cerevisiae (strain ATCC 204508 / S288c) (Baker's yeast).